We begin with the raw amino-acid sequence, 122 residues long: Large ribosomal subunit protein uL18 (122 aa).

Belongs to the universal ribosomal protein uL18 family. In terms of assembly, part of the 50S ribosomal subunit; part of the 5S rRNA/L5/L18/L25 subcomplex. Contacts the 5S and 23S rRNAs.

Its function is as follows. This is one of the proteins that bind and probably mediate the attachment of the 5S RNA into the large ribosomal subunit, where it forms part of the central protuberance. This Synechococcus sp. (strain JA-2-3B'a(2-13)) (Cyanobacteria bacterium Yellowstone B-Prime) protein is Large ribosomal subunit protein uL18.